Consider the following 227-residue polypeptide: C4-dicarboxylate TRAP transporter small permease protein DctQ (227 aa).

Residues 1-7 (MLRILDR) are Cytoplasmic-facing. Residues 8–28 (AEEVLIAALIATATVLIFVSV) traverse the membrane as a helical segment. At 29 to 67 (THRFTLGFVADFVGFFRGHGMTGAAAAAKSLYTTLRGIN) the chain is on the periplasmic side. The helical transmembrane segment at 68–88 (LVWAQELCIILFVWMAKFGAA) threads the bilayer. The Cytoplasmic portion of the chain corresponds to 89-112 (YGVRTGIHVGIDVLINRLDAPKRR). Residues 113 to 133 (FFILLGLGAGALFTGIIATLG) traverse the membrane as a helical segment. Topologically, residues 134-149 (ANFVLHMYHASSTSPD) are periplasmic. The helical transmembrane segment at 150–170 (LELPMWLVYLAIPMGSSLMCF) threads the bilayer. Over 171–227 (RFLQVAFGFARTGELPHHDHGHVDGVDTENEGIDAEGDVLLHSPLTPRDLVEKPKDN) the chain is Cytoplasmic.

This sequence belongs to the TRAP transporter small permease family. In terms of assembly, the complex comprises the extracytoplasmic solute receptor protein DctP, and the two transmembrane proteins DctQ and DctM.

The protein localises to the cell inner membrane. Its function is as follows. Part of the tripartite ATP-independent periplasmic (TRAP) transport system DctPQM involved in C4-dicarboxylates uptake. The sequence is that of C4-dicarboxylate TRAP transporter small permease protein DctQ from Rhodobacter capsulatus (Rhodopseudomonas capsulata).